The following is a 514-amino-acid chain: UDP-N-acetylmuramate--L-alanine ligase (514 aa).

Residue 127–133 (GTHGKTT) coordinates ATP. A compositionally biased stretch (low complexity) spans 495 to 505 (IGGTIPDIPGG). Residues 495 to 514 (IGGTIPDIPGGSTPDASAAG) are disordered.

It belongs to the MurCDEF family.

It is found in the cytoplasm. It catalyses the reaction UDP-N-acetyl-alpha-D-muramate + L-alanine + ATP = UDP-N-acetyl-alpha-D-muramoyl-L-alanine + ADP + phosphate + H(+). It functions in the pathway cell wall biogenesis; peptidoglycan biosynthesis. Functionally, cell wall formation. The chain is UDP-N-acetylmuramate--L-alanine ligase from Salinispora tropica (strain ATCC BAA-916 / DSM 44818 / JCM 13857 / NBRC 105044 / CNB-440).